We begin with the raw amino-acid sequence, 70 residues long: Gas vesicle protein A (70 aa).

Belongs to the gas vesicle GvpA family. In terms of assembly, the gas vesicle shell is 2 nm thick and consists of a single layer of this protein. It forms helical ribs nearly perpendicular to the long axis of the vesicle.

The protein resides in the gas vesicle shell. In terms of biological role, gas vesicles are hollow, gas filled proteinaceous nanostructures found in some microorganisms. During planktonic growth they allow positioning of the organism at a favorable depth for light or nutrient acquisition. GvpA forms the protein shell. This chain is Gas vesicle protein A, found in Cereibacter sphaeroides (strain ATCC 17023 / DSM 158 / JCM 6121 / CCUG 31486 / LMG 2827 / NBRC 12203 / NCIMB 8253 / ATH 2.4.1.) (Rhodobacter sphaeroides).